The following is a 173-amino-acid chain: Spermidine N(1)-acetyltransferase (173 aa).

Residues 5-162 enclose the N-acetyltransferase domain; the sequence is LTLRALERGD…GRYQDVKRMY (158 aa). Spermine is bound by residues methionine 28, glutamate 33, glutamate 41, and 49–52; that span reads HIHD. Residue glutamate 33 coordinates Mg(2+). Residues glutamate 33 and glutamate 41 each contribute to the spermidine site. Glutamate 75 is a binding site for Mg(2+). 84–86 is a spermine binding site; the sequence is EFQ. Residues 87–89, 94–100, and 127–136 each bind acetyl-CoA; these read III, QGKGFAR, and NPKAVHLYEE. The active-site Proton donor is tyrosine 134.

This sequence belongs to the acetyltransferase family. In terms of assembly, homododecamer; dimer of hexamers. Exists in solution in a variety of protein homooligomeric states including dodecamers in an open state. The presence of the polyamines spermidine or spermine shifts the equilibrium to dodecamers and induces the formation of the closed, symmetric dodecamers.

The protein localises to the cytoplasm. The catalysed reaction is an alkane-alpha,omega-diamine + acetyl-CoA = an N-acetylalkane-alpha,omega-diamine + CoA + H(+). It carries out the reaction spermidine + acetyl-CoA = N(1)-acetylspermidine + CoA + H(+). The enzyme catalyses spermidine + acetyl-CoA = N(8)-acetylspermidine + CoA + H(+). It catalyses the reaction spermine + acetyl-CoA = N(1)-acetylspermine + CoA + H(+). Its pathway is amine and polyamine degradation; spermidine degradation. It participates in amine and polyamine degradation; spermine degradation. Allosterically regulated by polyamines. Polyamines trigger conformational changes and induce the symmetric closed dodecameric state of the protein when they bind to their allosteric sites. Involved in the protection against polyamine toxicity by regulating their concentration. Catalyzes the transfer of an acetyl group from acetyl coenzyme A (AcCoA) to the primary amino groups of spermidine to yield N(1)- and N(8)-acetylspermidine. It can use polyamines such as spermine and N(1)-acetylspermine, but not putrescine or cadaverine. This chain is Spermidine N(1)-acetyltransferase (speG), found in Vibrio cholerae serotype O1 (strain ATCC 39315 / El Tor Inaba N16961).